We begin with the raw amino-acid sequence, 256 residues long: Imidazole glycerol phosphate synthase subunit HisF (256 aa).

Catalysis depends on residues D11 and D130.

Belongs to the HisA/HisF family. Heterodimer of HisH and HisF.

The protein localises to the cytoplasm. It carries out the reaction 5-[(5-phospho-1-deoxy-D-ribulos-1-ylimino)methylamino]-1-(5-phospho-beta-D-ribosyl)imidazole-4-carboxamide + L-glutamine = D-erythro-1-(imidazol-4-yl)glycerol 3-phosphate + 5-amino-1-(5-phospho-beta-D-ribosyl)imidazole-4-carboxamide + L-glutamate + H(+). It functions in the pathway amino-acid biosynthesis; L-histidine biosynthesis; L-histidine from 5-phospho-alpha-D-ribose 1-diphosphate: step 5/9. Functionally, IGPS catalyzes the conversion of PRFAR and glutamine to IGP, AICAR and glutamate. The HisF subunit catalyzes the cyclization activity that produces IGP and AICAR from PRFAR using the ammonia provided by the HisH subunit. The chain is Imidazole glycerol phosphate synthase subunit HisF from Cupriavidus pinatubonensis (strain JMP 134 / LMG 1197) (Cupriavidus necator (strain JMP 134)).